Reading from the N-terminus, the 182-residue chain is Flagellar transcriptional regulator FlhC (182 aa).

Residues Cys-138, Cys-141, Cys-158, and Cys-161 each coordinate Zn(2+).

The protein belongs to the FlhC family. As to quaternary structure, heterohexamer composed of two FlhC and four FlhD subunits. Each FlhC binds a FlhD dimer, forming a heterotrimer, and a hexamer assembles by dimerization of two heterotrimers. Requires Zn(2+) as cofactor.

The protein localises to the cytoplasm. In terms of biological role, functions in complex with FlhD as a master transcriptional regulator that regulates transcription of several flagellar and non-flagellar operons by binding to their promoter region. Activates expression of class 2 flagellar genes, including fliA, which is a flagellum-specific sigma factor that turns on the class 3 genes. Also regulates genes whose products function in a variety of physiological pathways. This is Flagellar transcriptional regulator FlhC from Gallionella capsiferriformans (strain ES-2) (Gallionella ferruginea capsiferriformans (strain ES-2)).